Reading from the N-terminus, the 394-residue chain is DNA replication and repair protein RecF (394 aa).

30-37 (GPNAAGKT) contributes to the ATP binding site.

The protein belongs to the RecF family.

The protein resides in the cytoplasm. Its function is as follows. The RecF protein is involved in DNA metabolism; it is required for DNA replication and normal SOS inducibility. RecF binds preferentially to single-stranded, linear DNA. It also seems to bind ATP. The sequence is that of DNA replication and repair protein RecF from Roseiflexus castenholzii (strain DSM 13941 / HLO8).